The sequence spans 855 residues: Inactive rhomboid protein 1 (855 aa).

The tract at residues 1-36 (MSEARRDSTSSLQRKKPPWLKLDIPSAVPPTAEEPS) is disordered. Topologically, residues 1–411 (MSEARRDSTS…HRPFFTYWLT (411 aa)) are cytoplasmic. Serine 76 and serine 176 each carry phosphoserine. Phosphothreonine is present on residues threonine 180 and threonine 183. A Phosphoserine modification is found at serine 390. The chain crosses the membrane as a helical span at residues 412–432 (FVHSLVTILAVCIYGIAPVGF). At 433–655 (SQHETVDSVL…NPEVPDQFYR (223 aa)) the chain is on the lumenal side. N-linked (GlcNAc...) asparagine glycosylation occurs at asparagine 583. A helical membrane pass occupies residues 656–676 (LWLSLFLHAGILHCLVSICFQ). Residues 677–691 (MTVLRDLEKLAGWHR) lie on the Cytoplasmic side of the membrane. A helical membrane pass occupies residues 692 to 712 (IAIIYLLSGVTGNLASAIFLP). The Lumenal segment spans residues 713–714 (YR). A helical transmembrane segment spans residues 715–735 (AEVGPAGSQFGILACLFVELF). Residues 736-746 (QSWQILARPWR) are Cytoplasmic-facing. A helical membrane pass occupies residues 747 to 767 (AFFKLLAVVLFLFTFGLLPWI). At 768 to 772 (DNFAH) the chain is on the lumenal side. The helical transmembrane segment at 773-793 (ISGFISGLFLSFAFLPYISFG) threads the bilayer. Residues 794–803 (KFDLYRKRCQ) lie on the Cytoplasmic side of the membrane. Residues 804–824 (IIIFQVVFLGLLAGLVVLFYF) traverse the membrane as a helical segment. Residues 825–855 (YPVRCEWCEFLTCIPFTDKFCEKYELDAQLH) are Lumenal-facing.

This sequence belongs to the peptidase S54 family. As to quaternary structure, homodimer, or homooligomer. Interacts with TGFA and HBEGF. Interacts with EGF; may retain EGF in the endoplasmic reticulum and regulates its degradation through the endoplasmic reticulum-associated degradation (ERAD). Interacts (via cytoplasmic N-terminus) with FRMD8/iTAP; this interaction leads to mutual protein stabilization. Interacts with ADAM17/TACE.

It localises to the endoplasmic reticulum membrane. Its subcellular location is the golgi apparatus membrane. Functionally, regulates ADAM17 protease, a sheddase of the epidermal growth factor (EGF) receptor ligands and TNF, thereby plays a role in sleep, cell survival, proliferation, migration and inflammation. Does not exhibit any protease activity on its own. The protein is Inactive rhomboid protein 1 (RHBDF1) of Papio anubis (Olive baboon).